Consider the following 631-residue polypeptide: MNRLGRLPLPLPPSVCLFCQSRATTPLPPSLQATRSMATARLRRRVARMTLSPDVAKPSVVKKTRGDKERFGPFAGMNQTEARIRDKPRTRSRAAQKRSGEPEEDSQKESPLYKALKMQTALAPIPYGRRAAIKAKIADITSFDQFQLLPVVRNSISSQALPGLVDVTPTPIQRLAIPRLLEEPKTEKKPTKADDDEPQYDQYLLAAETGSGKTLAYLLPVVDAVKREEARDKELEKKEQEEKAREREEKLKNRAFDIEPEIPPLSNAGRPRAIILVPTSELVAQVGVKVKALSHTVKYRSGMISSNLTPRRIKNTLFHPDGIDILVATPHLLASIAKTEPYVLSRVSHLVLDEADSLLDRSFAPTTTEIISKAAPSLRKLILCSATIPRSLDNLLRKRYPDIKRLTTPNLHAIPRRVQLGVVDIEKDPYRGNRSLACADVIWSIGKAGDAESEGPYASYVAPKTKKILVFVNEREEADEVAQFLRSKGIDAQSLSRDSDARKQEEILAEFTEAPPPPTPDEILLAQKQRRHEDAIPFEMPQKTNQDSSRRLANTKVLVTTDLASRGIDTLAVKTVILYHVPHTTIDFIHRLGRLGRMGKRGRGVVLVGKKDRKDVVKEVREGMFRGQALI.

A mitochondrion-targeting transit peptide spans 1 to 45 (MNRLGRLPLPLPPSVCLFCQSRATTPLPPSLQATRSMATARLRRR). A disordered region spans residues 68-111 (KERFGPFAGMNQTEARIRDKPRTRSRAAQKRSGEPEEDSQKESP). Residues 98–108 (RSGEPEEDSQK) are compositionally biased toward basic and acidic residues. The short motif at 141–174 (TSFDQFQLLPVVRNSISSQALPGLVDVTPTPIQR) is the Q motif element. Over residues 180-193 (LLEEPKTEKKPTKA) the composition is skewed to basic and acidic residues. Residues 180–199 (LLEEPKTEKKPTKADDDEPQ) are disordered. The Helicase ATP-binding domain maps to 194 to 406 (DDDEPQYDQY…RKRYPDIKRL (213 aa)). Position 207-214 (207-214 (AETGSGKT)) interacts with ATP. Residues 229 to 249 (EARDKELEKKEQEEKAREREE) form a disordered region. The DEAD box signature appears at 353–356 (DEAD). The Helicase C-terminal domain maps to 455–631 (GPYASYVAPK…EGMFRGQALI (177 aa)).

It belongs to the DEAD box helicase family. MRH4 subfamily.

The protein resides in the mitochondrion. It carries out the reaction ATP + H2O = ADP + phosphate + H(+). Functionally, ATP-binding RNA helicase involved in mitochondrial RNA metabolism. Required for maintenance of mitochondrial DNA. The chain is ATP-dependent RNA helicase mrh4, mitochondrial (mrh4) from Neosartorya fischeri (strain ATCC 1020 / DSM 3700 / CBS 544.65 / FGSC A1164 / JCM 1740 / NRRL 181 / WB 181) (Aspergillus fischerianus).